Consider the following 441-residue polypeptide: DNA primase DnaG (441 aa).

Positions 165–241 (DTIIIVEGRA…DIDYVARAPP (77 aa)) constitute a Toprim domain. Mg(2+) contacts are provided by Glu-171, Asp-215, and Asp-217. A compositionally biased stretch (basic and acidic residues) spans 299-315 (KEEVAERGEEMESKAEG). The tract at residues 299–320 (KEEVAERGEEMESKAEGAEQPT) is disordered.

This sequence belongs to the archaeal DnaG primase family. As to quaternary structure, forms a ternary complex with MCM helicase and DNA. Component of the archaeal exosome complex. It depends on Mg(2+) as a cofactor.

It carries out the reaction ssDNA + n NTP = ssDNA/pppN(pN)n-1 hybrid + (n-1) diphosphate.. RNA polymerase that catalyzes the synthesis of short RNA molecules used as primers for DNA polymerase during DNA replication. Also part of the exosome, which is a complex involved in RNA degradation. Acts as a poly(A)-binding protein that enhances the interaction between heteromeric, adenine-rich transcripts and the exosome. The chain is DNA primase DnaG from Ignicoccus hospitalis (strain KIN4/I / DSM 18386 / JCM 14125).